Reading from the N-terminus, the 235-residue chain is Proteasome subunit alpha type-2-A (235 aa).

Lysine 64 is covalently cross-linked (Glycyl lysine isopeptide (Lys-Gly) (interchain with G-Cter in ubiquitin)).

The protein belongs to the peptidase T1A family. Component of the 20S core complex of the 26S proteasome. The 26S proteasome is composed of a core protease (CP), known as the 20S proteasome, capped at one or both ends by the 19S regulatory particle (RP/PA700). The 20S proteasome core is composed of 28 subunits that are arranged in four stacked rings, resulting in a barrel-shaped structure. The two end rings are each formed by seven alpha subunits, and the two central rings are each formed by seven beta subunits. The catalytic chamber with the active sites is on the inside of the barrel.

The protein localises to the cytoplasm. It is found in the nucleus. Its function is as follows. The proteasome is a multicatalytic proteinase complex which is characterized by its ability to cleave peptides with Arg, Phe, Tyr, Leu, and Glu adjacent to the leaving group at neutral or slightly basic pH. The proteasome has an ATP-dependent proteolytic activity. The sequence is that of Proteasome subunit alpha type-2-A (PAB1) from Arabidopsis thaliana (Mouse-ear cress).